The following is a 339-amino-acid chain: MDKKIILAIESSCDETAAAVVVNGREVLSNIISSQIDIHTKFGGVVPEVASRKHIEAINAVVEEALEVAGVTFDDIDAIAVTYGPGLVGALLVGLQYAKGLAYSLDKPLIGVNHIEGHISANFIDHKDLEPPFVCLVVSGGHTFVVHVEDYGKFEIIGETRDDAAGEAFDKVARAVGLGYPGGPKIDKLAKEGNSDAIKFPKANFHDDTLDFSFSGVKSAVLNYLNKMEMKNEEINKADVVASFQKAVVEVLTDNAIKTCKMRKADKIAIAGGVASNSALRENLLREGEKRGIKVLFPSPILCTDNAAMIGSAAYFELLKGNVSEMSLNAKPNLRLGER.

Residues His-114 and His-118 each coordinate Fe cation. Residues 137–141, Asp-170, Gly-183, Asp-187, and Asn-277 each bind substrate; that span reads VVSGG. Asp-305 is a Fe cation binding site.

Belongs to the KAE1 / TsaD family. Requires Fe(2+) as cofactor.

The protein localises to the cytoplasm. It carries out the reaction L-threonylcarbamoyladenylate + adenosine(37) in tRNA = N(6)-L-threonylcarbamoyladenosine(37) in tRNA + AMP + H(+). Its function is as follows. Required for the formation of a threonylcarbamoyl group on adenosine at position 37 (t(6)A37) in tRNAs that read codons beginning with adenine. Is involved in the transfer of the threonylcarbamoyl moiety of threonylcarbamoyl-AMP (TC-AMP) to the N6 group of A37, together with TsaE and TsaB. TsaD likely plays a direct catalytic role in this reaction. The protein is tRNA N6-adenosine threonylcarbamoyltransferase of Clostridium perfringens (strain ATCC 13124 / DSM 756 / JCM 1290 / NCIMB 6125 / NCTC 8237 / Type A).